The primary structure comprises 273 residues: Dermonecrotic toxin LspaSicTox-alphaIA1ii (273 aa).

His-5 is a catalytic residue. Residues Glu-25 and Asp-27 each contribute to the Mg(2+) site. His-41 serves as the catalytic Nucleophile. 2 disulfide bridges follow: Cys-45/Cys-51 and Cys-47/Cys-190. Asp-85 contributes to the Mg(2+) binding site.

Belongs to the arthropod phospholipase D family. Class II subfamily. Mg(2+) is required as a cofactor. In terms of tissue distribution, expressed by the venom gland.

The protein resides in the secreted. It carries out the reaction an N-(acyl)-sphingosylphosphocholine = an N-(acyl)-sphingosyl-1,3-cyclic phosphate + choline. The enzyme catalyses an N-(acyl)-sphingosylphosphoethanolamine = an N-(acyl)-sphingosyl-1,3-cyclic phosphate + ethanolamine. It catalyses the reaction a 1-acyl-sn-glycero-3-phosphocholine = a 1-acyl-sn-glycero-2,3-cyclic phosphate + choline. The catalysed reaction is a 1-acyl-sn-glycero-3-phosphoethanolamine = a 1-acyl-sn-glycero-2,3-cyclic phosphate + ethanolamine. Functionally, dermonecrotic toxins cleave the phosphodiester linkage between the phosphate and headgroup of certain phospholipids (sphingolipid and lysolipid substrates), forming an alcohol (often choline) and a cyclic phosphate. This toxin acts on sphingomyelin (SM). It may also act on ceramide phosphoethanolamine (CPE), lysophosphatidylcholine (LPC) and lysophosphatidylethanolamine (LPE), but not on lysophosphatidylserine (LPS), and lysophosphatidylglycerol (LPG). It acts by transphosphatidylation, releasing exclusively cyclic phosphate products as second products. Induces dermonecrosis, hemolysis, increased vascular permeability, edema, inflammatory response, and platelet aggregation. The polypeptide is Dermonecrotic toxin LspaSicTox-alphaIA1ii (Loxosceles spadicea (Recluse spider)).